The sequence spans 453 residues: UDP-N-acetylmuramoylalanine--D-glutamate ligase (453 aa).

An ATP-binding site is contributed by 119 to 125 (GSNGKTT).

It belongs to the MurCDEF family.

It is found in the cytoplasm. It catalyses the reaction UDP-N-acetyl-alpha-D-muramoyl-L-alanine + D-glutamate + ATP = UDP-N-acetyl-alpha-D-muramoyl-L-alanyl-D-glutamate + ADP + phosphate + H(+). It participates in cell wall biogenesis; peptidoglycan biosynthesis. Its function is as follows. Cell wall formation. Catalyzes the addition of glutamate to the nucleotide precursor UDP-N-acetylmuramoyl-L-alanine (UMA). This Streptococcus uberis (strain ATCC BAA-854 / 0140J) protein is UDP-N-acetylmuramoylalanine--D-glutamate ligase.